The chain runs to 266 residues: Nickel import ATP-binding protein NikE (266 aa).

One can recognise an ABC transporter domain in the interval 4 to 252 (ISADNIVKIY…RHPASRLLRE (249 aa)). 45–52 (GRSGCGKS) contributes to the ATP binding site.

This sequence belongs to the ABC transporter superfamily. Nickel importer (TC 3.A.1.5.3) family. The complex is composed of two ATP-binding proteins (NikD and NikE), two transmembrane proteins (NikB and NikC) and a solute-binding protein (NikA).

Its subcellular location is the cell inner membrane. It carries out the reaction Ni(2+)(out) + ATP + H2O = Ni(2+)(in) + ADP + phosphate + H(+). Part of the ABC transporter complex NikABCDE involved in nickel import. Responsible for energy coupling to the transport system. This chain is Nickel import ATP-binding protein NikE, found in Brucella suis biovar 1 (strain 1330).